A 233-amino-acid polypeptide reads, in one-letter code: ATP synthase subunit a, chloroplastic (233 aa).

A run of 4 helical transmembrane segments spans residues 27-47, 84-104, 122-142, and 192-212; these read VLLI…LGTL, VPFV…GALI, DINT…YAGF, and VLCL…GIFA.

The protein belongs to the ATPase A chain family. F-type ATPases have 2 components, CF(1) - the catalytic core - and CF(0) - the membrane proton channel. CF(1) has five subunits: alpha(3), beta(3), gamma(1), delta(1), epsilon(1). CF(0) has four main subunits: a, b, b' and c.

It localises to the plastid. The protein localises to the chloroplast thylakoid membrane. Functionally, key component of the proton channel; it plays a direct role in the translocation of protons across the membrane. The polypeptide is ATP synthase subunit a, chloroplastic (Ochrosphaera neapolitana).